Here is a 137-residue protein sequence, read N- to C-terminus: 6,7-dimethyl-8-ribityllumazine synthase (137 aa).

5-amino-6-(D-ribitylamino)uracil is bound by residues phenylalanine 11, 43-45 (SFD), and 67-69 (CVI). 72–73 (DT) serves as a coordination point for (2S)-2-hydroxy-3-oxobutyl phosphate. The active-site Proton donor is the histidine 75. Position 100 (leucine 100) interacts with 5-amino-6-(D-ribitylamino)uracil. Arginine 115 serves as a coordination point for (2S)-2-hydroxy-3-oxobutyl phosphate.

The protein belongs to the DMRL synthase family. As to quaternary structure, forms an icosahedral capsid composed of 60 subunits, arranged as a dodecamer of pentamers.

It catalyses the reaction (2S)-2-hydroxy-3-oxobutyl phosphate + 5-amino-6-(D-ribitylamino)uracil = 6,7-dimethyl-8-(1-D-ribityl)lumazine + phosphate + 2 H2O + H(+). It participates in cofactor biosynthesis; riboflavin biosynthesis; riboflavin from 2-hydroxy-3-oxobutyl phosphate and 5-amino-6-(D-ribitylamino)uracil: step 1/2. Its function is as follows. Catalyzes the formation of 6,7-dimethyl-8-ribityllumazine by condensation of 5-amino-6-(D-ribitylamino)uracil with 3,4-dihydroxy-2-butanone 4-phosphate. This is the penultimate step in the biosynthesis of riboflavin. This chain is 6,7-dimethyl-8-ribityllumazine synthase, found in Methanococcus maripaludis (strain C6 / ATCC BAA-1332).